The primary structure comprises 623 residues: Laccase-1 (623 aa).

An N-terminal signal peptide occupies residues 1 to 22 (MKTFTSALALVVGMLAPGAVVA). A propeptide spanning residues 23–50 (APPSTPAQRDLVELREARQEGGKDLRPR) is cleaved from the precursor. Cys54 and Cys62 form a disulfide bridge. 2 N-linked (GlcNAc...) asparagine glycosylation sites follow: Asn89 and Asn138. His143, His145, His188, and His190 together coordinate Cu cation. 2 disulfide bridges follow: Cys164-Cys590 and Cys348-Cys382. Residues Asn251, Asn266, Asn294, and Asn339 are each glycosylated (N-linked (GlcNAc...) asparagine). Residues Asn426 and Asn446 are each glycosylated (N-linked (GlcNAc...) asparagine). 7 residues coordinate Cu cation: His481, His484, His486, His552, Cys553, His554, and His558. Positions 610–623 (KRRRWVEESEWLVR) are excised as a propeptide.

Belongs to the multicopper oxidase family. In terms of assembly, monomer. Cu cation serves as cofactor. In terms of tissue distribution, secreted protein; extracellular space.

The catalysed reaction is 4 hydroquinone + O2 = 4 benzosemiquinone + 2 H2O. Functionally, lignin degradation and detoxification of lignin-derived products. The chain is Laccase-1 (LAC1) from Melanocarpus albomyces.